A 555-amino-acid chain; its full sequence is CTP synthase (555 aa).

The tract at residues 1 to 271 (MVKRGKKTKY…DDKLAELFNI (271 aa)) is amidoligase domain. Position 19 (Ser19) interacts with CTP. Ser19 contacts UTP. ATP-binding positions include 20–25 (SLGKGL) and Asp77. Residues Asp77 and Glu145 each coordinate Mg(2+). CTP is bound by residues 152-154 (DIE), 192-197 (KTKPTQ), and Lys228. UTP contacts are provided by residues 192 to 197 (KTKPTQ) and Lys228. In terms of domain architecture, Glutamine amidotransferase type-1 spans 297 to 538 (RVGVVGKYVE…VHAAREQRDQ (242 aa)). An L-glutamine-binding site is contributed by Gly358. Cys385 serves as the catalytic Nucleophile; for glutamine hydrolysis. L-glutamine-binding positions include 386-389 (LGLQ), Glu409, and Arg466. Active-site residues include His511 and Glu513.

This sequence belongs to the CTP synthase family. Homotetramer.

It catalyses the reaction UTP + L-glutamine + ATP + H2O = CTP + L-glutamate + ADP + phosphate + 2 H(+). It carries out the reaction L-glutamine + H2O = L-glutamate + NH4(+). The enzyme catalyses UTP + NH4(+) + ATP = CTP + ADP + phosphate + 2 H(+). Its pathway is pyrimidine metabolism; CTP biosynthesis via de novo pathway; CTP from UDP: step 2/2. With respect to regulation, allosterically activated by GTP, when glutamine is the substrate; GTP has no effect on the reaction when ammonia is the substrate. The allosteric effector GTP functions by stabilizing the protein conformation that binds the tetrahedral intermediate(s) formed during glutamine hydrolysis. Inhibited by the product CTP, via allosteric rather than competitive inhibition. Its function is as follows. Catalyzes the ATP-dependent amination of UTP to CTP with either L-glutamine or ammonia as the source of nitrogen. Regulates intracellular CTP levels through interactions with the four ribonucleotide triphosphates. This chain is CTP synthase, found in Anaeromyxobacter sp. (strain Fw109-5).